The primary structure comprises 92 residues: MGRISLIVAALLMLSAISLVTSRYQSRQLFIELGRSQAEARDLDTNWRRLQLERAELARNARIDRAARDDLKMIPIVPDRTLYMNQPAGGAQ.

Topologically, residues 1 to 3 (MGR) are cytoplasmic. A helical membrane pass occupies residues 4–21 (ISLIVAALLMLSAISLVT). Topologically, residues 22–92 (SRYQSRQLFI…YMNQPAGGAQ (71 aa)) are periplasmic.

Belongs to the FtsL family. Part of a complex composed of FtsB, FtsL and FtsQ.

The protein localises to the cell inner membrane. In terms of biological role, essential cell division protein. May link together the upstream cell division proteins, which are predominantly cytoplasmic, with the downstream cell division proteins, which are predominantly periplasmic. The sequence is that of Cell division protein FtsL from Bordetella pertussis (strain Tohama I / ATCC BAA-589 / NCTC 13251).